The sequence spans 878 residues: DNA mismatch repair protein MutS (878 aa).

618-625 serves as a coordination point for ATP; it reads GPNMGGKS. 2 stretches are compositionally biased toward basic and acidic residues: residues 800 to 811 and 863 to 878; these read LEEESSRQRAEP and GADK…ARSR. Disordered regions lie at residues 800 to 842 and 859 to 878; these read LEEE…PDEL and SGEE…ARSR.

It belongs to the DNA mismatch repair MutS family.

Its function is as follows. This protein is involved in the repair of mismatches in DNA. It is possible that it carries out the mismatch recognition step. This protein has a weak ATPase activity. The chain is DNA mismatch repair protein MutS from Alkalilimnicola ehrlichii (strain ATCC BAA-1101 / DSM 17681 / MLHE-1).